Consider the following 809-residue polypeptide: Pentatricopeptide repeat-containing protein At1g11290, chloroplastic (809 aa).

The transit peptide at 1–46 (MSSQLVQFSTVPQIPNPPSRHRHFLSERNYIPANVYEHPAALLLER) directs the protein to the chloroplast. PPR repeat units lie at residues 68 to 98 (EHFFQTKLVSLFCRYGSVDEAARVFEPIDSK), 99 to 133 (LNVLYHTMLKGFAKVSDLDKALQFFVRMRYDDVEP), 134 to 168 (VVYNFTYLLKVCGDEAELRVGKEIHGLLVKSGFSL), 169 to 199 (DLFAMTGLENMYAKCRQVNEARKVFDRMPER), 200 to 234 (DLVSWNTIVAGYSQNGMARMALEMVKSMCEENLKP), 235 to 269 (SFITIVSVLPAVSALRLISVGKEIHGYAMRSGFDS), 270 to 300 (LVNISTALVDMYAKCGSLETARQLFDGMLER), 301 to 335 (NVVSWNSMIDAYVQNENPKEAMLIFQKMLDEGVKP), 336 to 370 (TDVSVMGALHACADLGDLERGRFIHKLSVELGLDR), 371 to 401 (NVSVVNSLISMYCKCKEVDTAASMFGKLQSR), 402 to 436 (TLVSWNAMILGFAQNGRPIDALNYFSQMRSRTVKP), 437 to 471 (DTFTYVSVITAIAELSITHHAKWIHGVVMRSCLDK), 472 to 502 (NVFVTTALVDMYAKCGAIMIARLIFDMMSER), 503 to 537 (HVTTWNAMIDGYGTHGFGKAALELFEEMQKGTIKP), 538 to 568 (NGVTFLSVISACSHSGLVEAGLKCFYMMKEN), and 574 to 604 (SMDHYGAMVDLLGRAGRLNEAWDFIMQMPVK). Positions 609–684 (VYGAMLGACQ…TPGCSMVEIK (76 aa)) are type E motif. Positions 685–715 (NEVHSFFSGSTAHPDSKKIYAFLEKLICHIK) are type E(+) motif. A type DYW motif region spans residues 716–809 (EAGYVPDTNL…NGACSCGDYW (94 aa)).

This sequence belongs to the PPR family. PCMP-H subfamily.

It localises to the plastid. Its subcellular location is the chloroplast. Functionally, involved in multiple sites RNA editing events in chloroplasts. Involved in the editing of the site 7 of ndhB (ndhB-7) and site 5 of ndhD (ndhD-5) transcripts, which are two plastid-encoded subunits of the chloroplast NAD(P)H dehydrogenase (NDH) complex. Involved in the editing of the site 3 of rpoB (rpoB-3) transcript. Required for the activity of the NDH complex of the photosynthetic electron transport chain. Possesses low endoribonuclease activity in vitro. The sequence is that of Pentatricopeptide repeat-containing protein At1g11290, chloroplastic (PCMP-H40) from Arabidopsis thaliana (Mouse-ear cress).